A 331-amino-acid polypeptide reads, in one-letter code: Protein C10 (331 aa).

This sequence belongs to the poxviridae C4/C10 protein family.

This chain is Protein C10, found in Vaccinia virus (strain Western Reserve) (VACV).